The primary structure comprises 223 residues: MLGQGLIFISLAFVAHALEIPISCAVSHNEQTEIFPHGTIDIPEMTFRPSDSQIDWSNLSHSDFVQCGVYEDSTNTWLAGASKYKIDEIKTLPKVPRDHYIILCDSSESNEIAKFTQVVHSFDFSSDSESAVVEQLHPSSPIPILTTAVRKKGSRPSKPQKEKQGNKQGSKTEESPNVDEDELESEPEEKTFFQKYGLYLIPILFLIIMSGNNANQQAANTAK.

An N-terminal signal peptide occupies residues 1-17; sequence MLGQGLIFISLAFVAHA. An N-linked (GlcNAc...) asparagine glycan is attached at N58. Residues 149 to 188 are disordered; it reads VRKKGSRPSKPQKEKQGNKQGSKTEESPNVDEDELESEPE. Residues 159 to 174 show a composition bias toward basic and acidic residues; it reads PQKEKQGNKQGSKTEE. The span at 176-187 shows a compositional bias: acidic residues; sequence PNVDEDELESEP. A helical transmembrane segment spans residues 191-211; it reads TFFQKYGLYLIPILFLIIMSG.

It localises to the endoplasmic reticulum membrane. This is an uncharacterized protein from Schizosaccharomyces pombe (strain 972 / ATCC 24843) (Fission yeast).